Here is a 963-residue protein sequence, read N- to C-terminus: Kinesin-1 heavy chain (963 aa).

Ala-2 is modified (N-acetylalanine). In terms of domain architecture, Kinesin motor spans 8 to 325 (NIKVMCRFRP…LLFGQRAKTI (318 aa)). 85-92 (GQTSSGKT) is a binding site for ATP. Lys-213 is covalently cross-linked (Glycyl lysine isopeptide (Lys-Gly) (interchain with G-Cter in SUMO2)). The stretch at 329 to 914 (VCVNVELTAE…AVRSKNMARR (586 aa)) forms a coiled coil. Positions 908-963 (SKNMARRGHSAQIAKPIRPGQHPAASPTHPSAIRGGGAFVQNSQPVAVRGGGGKQV) are disordered. The tract at residues 915 to 963 (GHSAQIAKPIRPGQHPAASPTHPSAIRGGGAFVQNSQPVAVRGGGGKQV) is globular. Position 933 is a phosphoserine (Ser-933). An Omega-N-methylarginine modification is found at Arg-956.

Belongs to the TRAFAC class myosin-kinesin ATPase superfamily. Kinesin family. Kinesin subfamily. As to quaternary structure, oligomer composed of two heavy chains and two light chains. Interacts with GRIP1 and PPP1R42. Interacts with SYBU. Interacts with JAKMIP1. Interacts with PLEKHM2. Interacts with ECPAS. Interacts with ZFYVE27. Found in a complex with OGT, RHOT1, RHOT2 and TRAK1. Interacts with APP (via cytoplasmic domain).

It localises to the cytoplasm. Its subcellular location is the cytoskeleton. It is found in the cytolytic granule membrane. The protein resides in the lysosome membrane. Functionally, microtubule-dependent motor required for normal distribution of mitochondria and lysosomes. Can induce formation of neurite-like membrane protrusions in non-neuronal cells in a ZFYVE27-dependent manner. Regulates centrosome and nuclear positioning during mitotic entry. During the G2 phase of the cell cycle in a BICD2-dependent manner, antagonizes dynein function and drives the separation of nuclei and centrosomes. Required for anterograde axonal transportation of MAPK8IP3/JIP3 which is essential for MAPK8IP3/JIP3 function in axon elongation. Through binding with PLEKHM2 and ARL8B, directs lysosome movement toward microtubule plus ends. Involved in NK cell-mediated cytotoxicity. Drives the polarization of cytolytic granules and microtubule-organizing centers (MTOCs) toward the immune synapse between effector NK lymphocytes and target cells. The polypeptide is Kinesin-1 heavy chain (Homo sapiens (Human)).